The sequence spans 350 residues: S-adenosylmethionine:tRNA ribosyltransferase-isomerase (350 aa).

It belongs to the QueA family. In terms of assembly, monomer.

The protein resides in the cytoplasm. The enzyme catalyses 7-aminomethyl-7-carbaguanosine(34) in tRNA + S-adenosyl-L-methionine = epoxyqueuosine(34) in tRNA + adenine + L-methionine + 2 H(+). It participates in tRNA modification; tRNA-queuosine biosynthesis. Its function is as follows. Transfers and isomerizes the ribose moiety from AdoMet to the 7-aminomethyl group of 7-deazaguanine (preQ1-tRNA) to give epoxyqueuosine (oQ-tRNA). In Bacillus mycoides (strain KBAB4) (Bacillus weihenstephanensis), this protein is S-adenosylmethionine:tRNA ribosyltransferase-isomerase.